The following is a 398-amino-acid chain: MADDVSEFLGQNPETAAWLELVHGECESDKLWRYRKEFILRNLSDVCGEAEVPPPPETNHKALDRLLAYSMVWANHVFTGCRYPLPVMEKVLKMAENIKVTDAPTHTTRDELVAKVKKRGISSSNEGVEEEPCKKQKSSDHGERESSYIEDTISDGNVPSTSLNKREARLSAAQRTDVNTEFYDKSSNRRSLPVSNAKSRLNLPEEAGYKHGATQGRKSHSDIRHQTSMKGPAQSSDNALKPTRRFTTEHTKERQPFFNRLYKTVAWKLVSAGGFNANLNHEELLNTCIESLKATLEVSFVPLTDLADLPQNKTSQENTVCELRCKSVYLGMGCGKTMETAKAVASREAVKLFLKKKVVVRICKRKFNGRDVEDLVLVDEEFRPVNLPPAIKNPQEIV.

In terms of domain architecture, XRN2-binding (XTBD) spans 19–124 (LELVHGECES…KVKKRGISSS (106 aa)). The tract at residues 118-245 (KRGISSSNEG…SDNALKPTRR (128 aa)) is disordered. Over residues 131-147 (EPCKKQKSSDHGERESS) the composition is skewed to basic and acidic residues. Polar residues-rich tracts occupy residues 154 to 163 (SDGNVPSTSL), 189 to 199 (RRSLPVSNAKS), and 226 to 238 (QTSM…SSDN).

The protein belongs to the CARF family.

It is found in the nucleus. Its subcellular location is the nucleoplasm. May regulate DNA damage response and cell proliferation. The sequence is that of Protein CDKN2AIP homolog A (cdkn2aip-a) from Xenopus laevis (African clawed frog).